A 102-amino-acid polypeptide reads, in one-letter code: Large ribosomal subunit protein bL21 (102 aa).

It belongs to the bacterial ribosomal protein bL21 family. Part of the 50S ribosomal subunit. Contacts protein L20.

Its function is as follows. This protein binds to 23S rRNA in the presence of protein L20. In Shouchella clausii (strain KSM-K16) (Alkalihalobacillus clausii), this protein is Large ribosomal subunit protein bL21.